A 213-amino-acid polypeptide reads, in one-letter code: Pyrrolidone-carboxylate peptidase (213 aa).

Residues glutamate 78, cysteine 141, and histidine 165 contribute to the active site.

Belongs to the peptidase C15 family. Homotetramer.

It is found in the cytoplasm. It carries out the reaction Release of an N-terminal pyroglutamyl group from a polypeptide, the second amino acid generally not being Pro.. Functionally, removes 5-oxoproline from various penultimate amino acid residues except L-proline. The protein is Pyrrolidone-carboxylate peptidase of Clostridium perfringens (strain SM101 / Type A).